A 281-amino-acid polypeptide reads, in one-letter code: Imidazoleglycerol-phosphate dehydratase, chloroplastic (281 aa).

The N-terminal 85 residues, 1 to 85 (MELYAASHSL…TSLPFHPETR (85 aa)), are a transit peptide targeting the chloroplast. Substrate is bound by residues Glu-95, 121–129 (HMLDQLASH), 147–151 (HHTNE), Arg-173, and Arg-195. 4 residues coordinate Mn(2+): His-121, His-147, His-148, and Glu-151. Mn(2+) contacts are provided by His-219, His-243, His-244, and Glu-247. Residues 243 to 251 (HHIIEATFK) and 273 to 275 (SSK) each bind substrate.

The protein belongs to the imidazoleglycerol-phosphate dehydratase family. Mn(2+) serves as cofactor.

The protein resides in the plastid. Its subcellular location is the chloroplast. The enzyme catalyses D-erythro-1-(imidazol-4-yl)glycerol 3-phosphate = 3-(imidazol-4-yl)-2-oxopropyl phosphate + H2O. The protein operates within amino-acid biosynthesis; L-histidine biosynthesis; L-histidine from 5-phospho-alpha-D-ribose 1-diphosphate: step 6/9. The sequence is that of Imidazoleglycerol-phosphate dehydratase, chloroplastic from Pisum sativum (Garden pea).